A 917-amino-acid polypeptide reads, in one-letter code: Bifunctional aspartokinase/homoserine dehydrogenase 2, chloroplastic (917 aa).

The N-terminal 89 residues, 1-89, are a transit peptide targeting the chloroplast; that stretch reads MQGLAVSCQL…EVNTYLPKGD (89 aa). An aspartokinase region spans residues 90 to 338; sequence MWSVHKFGGT…VSEAVILSTL (249 aa). The tract at residues 339 to 563 is interface; it reads SYQEAWEMSY…LSKTTLAVGI (225 aa). ACT domains are found at residues 413-488 and 494-571; these read VEGT…VING and AVGL…LIGG. The tract at residues 564 to 917 is homoserine dehydrogenase; it reads IGPGLIGGAL…RLASYLGAPS (354 aa). NAD(+) is bound by residues I569 and T650. NADP(+) is bound by residues I569, T650, and K674. I569, T650, and K674 together coordinate NADPH. Na(+) contacts are provided by E701, V704, A706, and L708. G759 and E762 together coordinate NADP(+). Residues E762 and D773 each contribute to the L-homoserine site. K777 functions as the Proton donor in the catalytic mechanism. G894 is an NAD(+) binding site. G894 serves as a coordination point for NADP(+). Position 894 (G894) interacts with NADPH.

In the N-terminal section; belongs to the aspartokinase family. It in the C-terminal section; belongs to the homoserine dehydrogenase family. As to quaternary structure, homo- or heterodimer. The cofactor is a metal cation.

The protein resides in the plastid. It localises to the chloroplast. It carries out the reaction L-homoserine + NADP(+) = L-aspartate 4-semialdehyde + NADPH + H(+). It catalyses the reaction L-homoserine + NAD(+) = L-aspartate 4-semialdehyde + NADH + H(+). The catalysed reaction is L-aspartate + ATP = 4-phospho-L-aspartate + ADP. The protein operates within amino-acid biosynthesis; L-lysine biosynthesis via DAP pathway; (S)-tetrahydrodipicolinate from L-aspartate: step 1/4. Its pathway is amino-acid biosynthesis; L-methionine biosynthesis via de novo pathway; L-homoserine from L-aspartate: step 1/3. It functions in the pathway amino-acid biosynthesis; L-methionine biosynthesis via de novo pathway; L-homoserine from L-aspartate: step 3/3. It participates in amino-acid biosynthesis; L-threonine biosynthesis; L-threonine from L-aspartate: step 1/5. The protein operates within amino-acid biosynthesis; L-threonine biosynthesis; L-threonine from L-aspartate: step 3/5. In terms of biological role, bifunctional aspartate kinase and homoserine dehydrogenase that catalyzes the first and the third steps toward the synthesis of lysine, methionine and threonine from aspartate. This chain is Bifunctional aspartokinase/homoserine dehydrogenase 2, chloroplastic (AKHSDH2), found in Zea mays (Maize).